The primary structure comprises 176 residues: Translation initiation factor IF-3 (176 aa).

The protein belongs to the IF-3 family. As to quaternary structure, monomer.

Its subcellular location is the cytoplasm. IF-3 binds to the 30S ribosomal subunit and shifts the equilibrium between 70S ribosomes and their 50S and 30S subunits in favor of the free subunits, thus enhancing the availability of 30S subunits on which protein synthesis initiation begins. This is Translation initiation factor IF-3 from Rippkaea orientalis (strain PCC 8801 / RF-1) (Cyanothece sp. (strain PCC 8801)).